The sequence spans 998 residues: Methyl sulfide methyltransferase-associated sensor (998 aa).

The 38-residue stretch at 40 to 77 (FGYSPKDFISGGLGYADIIYPADLEIAVSQFFSYVEKD) folds into the PAS 1 domain. Residues 117-169 (FTQQYRLLNKSGDVLWVEAEIKVLEEEEGKAGLFQVTVFDISRWKHTEKAMPA) form the PAC 1 domain. In terms of domain architecture, PAS 2 spans 209-246 (LGYTPEDFTSGRIVYTDIIHPDDLDNVRAEVSKNTEEG). The 53-residue stretch at 250 to 302 (FSKEYRVLAKSGEVRYVDERTLIRRNEKGEITCYQGILLDITQRKEAEELILS) folds into the PAC 2 domain. In terms of domain architecture, GAF 1 spans 314–458 (ASLDEVLLLL…NAYLAGIAIE (145 aa)). Positions 469–540 (SENRFRTIFD…ENMQKIKAEG (72 aa)) constitute a PAS 3 domain. Residues 609–752 (ASLKEITDFA…LMQGMWQLIQ (144 aa)) form the GAF 2 domain. A heme-binding site is contributed by Cys656. The region spanning 783 to 998 (EFVEEMMFPE…GNLMHVKLPK (216 aa)) is the Histidine kinase domain.

It depends on heme as a cofactor. In terms of processing, autophosphorylates: autophosphorylation is dependent on the redox state of heme cofactor and is promoted upon reduction.

The protein localises to the cytoplasm. It carries out the reaction ATP + protein L-histidine = ADP + protein N-phospho-L-histidine.. Functionally, heme-binding sensor kinase component part of a two-component regulatory system involved in methyl sulfide metabolism. Does not act as a phytochrome-like photoreceptor. This is Methyl sulfide methyltransferase-associated sensor (msmS) from Methanosarcina acetivorans (strain ATCC 35395 / DSM 2834 / JCM 12185 / C2A).